The primary structure comprises 162 residues: Putative colanic acid biosynthesis acetyltransferase WcaB (162 aa).

This sequence belongs to the transferase hexapeptide repeat family.

Its pathway is slime biogenesis; slime polysaccharide biosynthesis. This chain is Putative colanic acid biosynthesis acetyltransferase WcaB (wcaB), found in Escherichia coli O157:H7.